The chain runs to 183 residues: Large ribosomal subunit protein bL32m (183 aa).

A mitochondrion-targeting transit peptide spans 1–71 (MNSLIFGKQL…DFFSNNGILL (71 aa)). Zn(2+)-binding residues include cysteine 104, cysteine 107, cysteine 117, and cysteine 120.

The protein belongs to the bacterial ribosomal protein bL32 family. In terms of assembly, component of the mitochondrial large ribosomal subunit (mt-LSU). Mature yeast 74S mitochondrial ribosomes consist of a small (37S) and a large (54S) subunit. The 37S small subunit contains a 15S ribosomal RNA (15S mt-rRNA) and 34 different proteins. The 54S large subunit contains a 21S rRNA (21S mt-rRNA) and 46 different proteins. bL32m has a zinc binding site. MRPL32 precursor is processed by the m-AAA protease (composed of YTA12/RCA1 and YTA10/AFG3), which cleaves the N-terminal transit peptide. Cleavage by the m-AAA protease takes place prior to assembly into the large subunit, an essential step for mitochondrial ribosome (mitoribosome) assembly. Proper processing by the m-AAA protease is dependent on the zinc-binding region within the tightly folded C-terminal domain of MRPL32: zinc-dependent folding halts degradation initiated from the N-terminus and triggers the release of mature MRPL32.

It is found in the mitochondrion. In terms of biological role, component of the mitochondrial ribosome (mitoribosome), a dedicated translation machinery responsible for the synthesis of mitochondrial genome-encoded proteins, including at least some of the essential transmembrane subunits of the mitochondrial respiratory chain. The mitoribosomes are attached to the mitochondrial inner membrane and translation products are cotranslationally integrated into the membrane. This is Large ribosomal subunit protein bL32m from Saccharomyces cerevisiae (strain ATCC 204508 / S288c) (Baker's yeast).